The primary structure comprises 319 residues: Cytochrome c biogenesis protein CcsA (319 aa).

Transmembrane regions (helical) follow at residues 15–35 (FSIV…NKIV), 44–64 (GMIL…IFAG), 71–91 (LYES…IPYF), 96–116 (LSAI…SGFF), 141–161 (MILA…LLVI), 223–243 (VISL…VWAN), 258–278 (WAFI…NINL), and 284–304 (AIVA…VNLL).

This sequence belongs to the CcmF/CycK/Ccl1/NrfE/CcsA family. May interact with Ccs1.

It is found in the plastid. It localises to the chloroplast thylakoid membrane. Required during biogenesis of c-type cytochromes (cytochrome c6 and cytochrome f) at the step of heme attachment. This Fagopyrum esculentum subsp. ancestrale (Wild buckwheat) protein is Cytochrome c biogenesis protein CcsA.